We begin with the raw amino-acid sequence, 366 residues long: Beta sliding clamp (366 aa).

This sequence belongs to the beta sliding clamp family. In terms of assembly, forms a ring-shaped head-to-tail homodimer around DNA which binds and tethers DNA polymerases and other proteins to the DNA. The DNA replisome complex has a single clamp-loading complex (3 tau and 1 each of delta, delta', psi and chi subunits) which binds 3 Pol III cores (1 core on the leading strand and 2 on the lagging strand) each with a beta sliding clamp dimer. Additional proteins in the replisome are other copies of gamma, psi and chi, Ssb, DNA helicase and RNA primase.

It is found in the cytoplasm. In terms of biological role, confers DNA tethering and processivity to DNA polymerases and other proteins. Acts as a clamp, forming a ring around DNA (a reaction catalyzed by the clamp-loading complex) which diffuses in an ATP-independent manner freely and bidirectionally along dsDNA. Initially characterized for its ability to contact the catalytic subunit of DNA polymerase III (Pol III), a complex, multichain enzyme responsible for most of the replicative synthesis in bacteria; Pol III exhibits 3'-5' exonuclease proofreading activity. The beta chain is required for initiation of replication as well as for processivity of DNA replication. The chain is Beta sliding clamp (dnaN) from Chlamydia muridarum (strain MoPn / Nigg).